A 667-amino-acid polypeptide reads, in one-letter code: Protein adenylyltransferase SelO, mitochondrial (667 aa).

The N-terminal 6 residues, 1 to 6 (MASVRA), are a transit peptide targeting the mitochondrion. Residues G154, G156, K177, D189, G190, R247, and R254 each contribute to the ATP site. The active-site Proton acceptor is D341. Mg(2+) is bound by residues N342 and D351. D351 serves as a coordination point for ATP. A disordered region spans residues 628-652 (YHSEEEATGPEAVARSTEEQSSYSN). A Phosphothreonine modification is found at T635. A Phosphoserine modification is found at S651. Position 665 (U665) is a non-standard amino acid, selenocysteine.

The protein belongs to the SELO family. Mg(2+) serves as cofactor.

Its subcellular location is the mitochondrion. It carries out the reaction L-tyrosyl-[protein] + ATP = O-(5'-adenylyl)-L-tyrosyl-[protein] + diphosphate. The catalysed reaction is L-threonyl-[protein] + ATP = 3-O-(5'-adenylyl)-L-threonyl-[protein] + diphosphate. It catalyses the reaction L-seryl-[protein] + ATP = 3-O-(5'-adenylyl)-L-seryl-[protein] + diphosphate. Functionally, catalyzes the transfer of adenosine 5'-monophosphate (AMP) to Ser, Thr and Tyr residues of target proteins (AMPylation). May be a redox-active mitochondrial selenoprotein which interacts with a redox target protein. This chain is Protein adenylyltransferase SelO, mitochondrial, found in Mus musculus (Mouse).